We begin with the raw amino-acid sequence, 411 residues long: Putative nickel insertion protein (411 aa).

This sequence belongs to the LarC family.

This is Putative nickel insertion protein from Methanothermobacter thermautotrophicus (strain ATCC 29096 / DSM 1053 / JCM 10044 / NBRC 100330 / Delta H) (Methanobacterium thermoautotrophicum).